A 106-amino-acid chain; its full sequence is Small ribosomal subunit protein uS10 (106 aa).

Belongs to the universal ribosomal protein uS10 family. In terms of assembly, part of the 30S ribosomal subunit.

Its function is as follows. Involved in the binding of tRNA to the ribosomes. The polypeptide is Small ribosomal subunit protein uS10 (Archaeoglobus fulgidus (strain ATCC 49558 / DSM 4304 / JCM 9628 / NBRC 100126 / VC-16)).